The primary structure comprises 122 residues: Phosphoribosyl-ATP pyrophosphatase (122 aa).

The protein belongs to the PRA-PH family.

It localises to the cytoplasm. The enzyme catalyses 1-(5-phospho-beta-D-ribosyl)-ATP + H2O = 1-(5-phospho-beta-D-ribosyl)-5'-AMP + diphosphate + H(+). It participates in amino-acid biosynthesis; L-histidine biosynthesis; L-histidine from 5-phospho-alpha-D-ribose 1-diphosphate: step 2/9. The polypeptide is Phosphoribosyl-ATP pyrophosphatase (Burkholderia mallei (strain NCTC 10247)).